We begin with the raw amino-acid sequence, 105 residues long: UPF0145 protein Ping_0381 (105 aa).

This sequence belongs to the UPF0145 family.

This chain is UPF0145 protein Ping_0381, found in Psychromonas ingrahamii (strain DSM 17664 / CCUG 51855 / 37).